The primary structure comprises 240 residues: Tetrahydromethanopterin S-methyltransferase subunit A (240 aa).

Over 1–218 the chain is Cytoplasmic; the sequence is MAEKREPAAG…KFHAGVHAGK (218 aa). His-85 serves as a coordination point for 5-hydroxybenzimidazolylcob(I)amide. A helical membrane pass occupies residues 219 to 239; it reads FEGIMIGLAITLSLLGLILFG. Residue Arg-240 is a topological domain, extracellular.

Belongs to the MtrA family. In terms of assembly, the complex is composed of 8 subunits; MtrA, MtrB, MtrC, MtrD, MtrE, MtrF, MtrG and MtrH. Requires 5-hydroxybenzimidazolylcob(I)amide as cofactor.

It is found in the cell membrane. The enzyme catalyses 5-methyl-5,6,7,8-tetrahydromethanopterin + coenzyme M + 2 Na(+)(in) = 5,6,7,8-tetrahydromethanopterin + methyl-coenzyme M + 2 Na(+)(out). Its pathway is one-carbon metabolism; methanogenesis from CO(2); methyl-coenzyme M from 5,10-methylene-5,6,7,8-tetrahydromethanopterin: step 2/2. In terms of biological role, part of a complex that catalyzes the formation of methyl-coenzyme M and tetrahydromethanopterin from coenzyme M and methyl-tetrahydromethanopterin. This is an energy-conserving, sodium-ion translocating step. The polypeptide is Tetrahydromethanopterin S-methyltransferase subunit A (Methanohalophilus mahii (strain ATCC 35705 / DSM 5219 / SLP)).